Reading from the N-terminus, the 556-residue chain is Glucose-6-phosphate isomerase (556 aa).

Glutamate 360 acts as the Proton donor in catalysis. Catalysis depends on residues histidine 391 and lysine 519.

It belongs to the GPI family.

It is found in the cytoplasm. It catalyses the reaction alpha-D-glucose 6-phosphate = beta-D-fructose 6-phosphate. It participates in carbohydrate biosynthesis; gluconeogenesis. Its pathway is carbohydrate degradation; glycolysis; D-glyceraldehyde 3-phosphate and glycerone phosphate from D-glucose: step 2/4. Functionally, catalyzes the reversible isomerization of glucose-6-phosphate to fructose-6-phosphate. The sequence is that of Glucose-6-phosphate isomerase from Acinetobacter baumannii (strain AB0057).